Reading from the N-terminus, the 572-residue chain is Proline dehydrogenase 1, mitochondrial (572 aa).

Positions 105–124 are enriched in low complexity; sequence NHSNQTNNVNNKNYNNNNNN. Residues 105 to 140 are disordered; the sequence is NHSNQTNNVNNKNYNNNNNNFEKDDKFGPPNNQNNN.

The protein belongs to the proline oxidase family. It depends on FAD as a cofactor.

The protein localises to the mitochondrion matrix. The catalysed reaction is L-proline + a quinone = (S)-1-pyrroline-5-carboxylate + a quinol + H(+). It functions in the pathway amino-acid degradation; L-proline degradation into L-glutamate; L-glutamate from L-proline: step 1/2. In terms of biological role, converts proline to delta-1-pyrroline-5-carboxylate. The protein is Proline dehydrogenase 1, mitochondrial (prodh) of Dictyostelium discoideum (Social amoeba).